A 530-amino-acid chain; its full sequence is Chitin synthase 1 (530 aa).

A glycan (N-linked (GlcNAc...) asparagine) is linked at N17. A disordered region spans residues 22-94; it reads QESSSNLIQQ…QANNNRKVTR (73 aa). A compositionally biased stretch (polar residues) spans 24-56; it reads SSSNLIQQQQPGTNYARNQQTLSSLRSQKQQAE. N-linked (GlcNAc...) asparagine glycosylation is found at N118, N310, and N474. The next 2 helical transmembrane spans lie at 477-497 and 508-528; these read FFAGVYGLIHFSKIWNSGHGF and IYNVISLIFSWFSVVIVLSFL.

The protein belongs to the chitin synthase family. Class II subfamily.

It localises to the cell membrane. It catalyses the reaction [(1-&gt;4)-N-acetyl-beta-D-glucosaminyl](n) + UDP-N-acetyl-alpha-D-glucosamine = [(1-&gt;4)-N-acetyl-beta-D-glucosaminyl](n+1) + UDP + H(+). Polymerizes chitin, a structural polymer of the cell wall and septum, by transferring the sugar moiety of UDP-GlcNAc to the non-reducing end of the growing chitin polymer. This chain is Chitin synthase 1, found in Rhizopus delemar (strain RA 99-880 / ATCC MYA-4621 / FGSC 9543 / NRRL 43880) (Mucormycosis agent).